Consider the following 251-residue polypeptide: 2,3-bisphosphoglycerate-dependent phosphoglycerate mutase (251 aa).

Residues 8–15 (RHGESLWN), 21–22 (TG), Arg60, 87–90 (ERHY), Lys98, 114–115 (RR), and 183–184 (GN) each bind substrate. His9 functions as the Tele-phosphohistidine intermediate in the catalytic mechanism. Residue Glu87 is the Proton donor/acceptor of the active site.

This sequence belongs to the phosphoglycerate mutase family. BPG-dependent PGAM subfamily.

The enzyme catalyses (2R)-2-phosphoglycerate = (2R)-3-phosphoglycerate. It participates in carbohydrate degradation; glycolysis; pyruvate from D-glyceraldehyde 3-phosphate: step 3/5. Catalyzes the interconversion of 2-phosphoglycerate and 3-phosphoglycerate. This chain is 2,3-bisphosphoglycerate-dependent phosphoglycerate mutase, found in Thermoanaerobacter sp. (strain X514).